The primary structure comprises 507 residues: Glutamyl-tRNA(Gln) amidotransferase subunit A, mitochondrial (507 aa).

Positions 29–51 are disordered; that stretch reads THPPEPIPPPPPPAPSSSPSPKQ. Positions 31 to 46 are enriched in pro residues; the sequence is PPEPIPPPPPPAPSSS. Catalysis depends on charge relay system residues Lys-57 and Ser-135. Ser-159 functions as the Acyl-ester intermediate in the catalytic mechanism.

The protein belongs to the amidase family. GatA subfamily. Subunit of the heterotrimeric GatCAB amidotransferase (AdT) complex, composed of A, B and C subunits.

It localises to the mitochondrion. It catalyses the reaction L-glutamyl-tRNA(Gln) + L-glutamine + ATP + H2O = L-glutaminyl-tRNA(Gln) + L-glutamate + ADP + phosphate + H(+). Functionally, allows the formation of correctly charged Gln-tRNA(Gln) through the transamidation of misacylated Glu-tRNA(Gln) in the mitochondria. The reaction takes place in the presence of glutamine and ATP through an activated gamma-phospho-Glu-tRNA(Gln). The polypeptide is Glutamyl-tRNA(Gln) amidotransferase subunit A, mitochondrial (Podospora anserina (strain S / ATCC MYA-4624 / DSM 980 / FGSC 10383) (Pleurage anserina)).